A 131-amino-acid chain; its full sequence is Small ribosomal subunit protein bS6 (131 aa).

The interval 92 to 131 (RVDEHKDGPSVQMQKRDERERGDRGDRGERRERRDRDDRN) is disordered.

This sequence belongs to the bacterial ribosomal protein bS6 family.

Its function is as follows. Binds together with bS18 to 16S ribosomal RNA. The sequence is that of Small ribosomal subunit protein bS6 from Paracoccus denitrificans (strain Pd 1222).